The chain runs to 139 residues: NADPH-dependent 7-cyano-7-deazaguanine reductase (139 aa).

Catalysis depends on cysteine 34, which acts as the Thioimide intermediate. The active-site Proton donor is the aspartate 41. Substrate-binding positions include 56–58 (IEL) and 75–76 (HE).

This sequence belongs to the GTP cyclohydrolase I family. QueF type 1 subfamily.

Its subcellular location is the cytoplasm. The enzyme catalyses 7-aminomethyl-7-carbaguanine + 2 NADP(+) = 7-cyano-7-deazaguanine + 2 NADPH + 3 H(+). Its pathway is tRNA modification; tRNA-queuosine biosynthesis. Its function is as follows. Catalyzes the NADPH-dependent reduction of 7-cyano-7-deazaguanine (preQ0) to 7-aminomethyl-7-deazaguanine (preQ1). This Nitrosomonas eutropha (strain DSM 101675 / C91 / Nm57) protein is NADPH-dependent 7-cyano-7-deazaguanine reductase.